A 303-amino-acid chain; its full sequence is Quinolinate synthase (303 aa).

Iminosuccinate is bound by residues His23 and Ser40. Residue Cys85 participates in [4Fe-4S] cluster binding. Iminosuccinate contacts are provided by residues 111-113 (YIN) and Ser128. Residue Cys171 coordinates [4Fe-4S] cluster. Residues 197–199 (HPE) and Thr214 each bind iminosuccinate. Residue Cys259 participates in [4Fe-4S] cluster binding.

Belongs to the quinolinate synthase family. Type 2 subfamily. Requires [4Fe-4S] cluster as cofactor.

It localises to the cytoplasm. It catalyses the reaction iminosuccinate + dihydroxyacetone phosphate = quinolinate + phosphate + 2 H2O + H(+). Its pathway is cofactor biosynthesis; NAD(+) biosynthesis; quinolinate from iminoaspartate: step 1/1. Functionally, catalyzes the condensation of iminoaspartate with dihydroxyacetone phosphate to form quinolinate. The sequence is that of Quinolinate synthase from Clostridium acetobutylicum (strain ATCC 824 / DSM 792 / JCM 1419 / IAM 19013 / LMG 5710 / NBRC 13948 / NRRL B-527 / VKM B-1787 / 2291 / W).